Here is a 297-residue protein sequence, read N- to C-terminus: Small ribosomal subunit protein uS2 (297 aa).

The interval 276 to 297 (DWASSAPAEGWAGEAPATEAKW) is disordered.

The protein belongs to the universal ribosomal protein uS2 family. Component of the small ribosomal subunit. Mature ribosomes consist of a small (40S) and a large (60S) subunit. The 40S subunit contains about 33 different proteins and 1 molecule of RNA (18S). The 60S subunit contains about 49 different proteins and 3 molecules of RNA (25S, 5.8S and 5S). Interacts with RPS21.

The protein resides in the cytoplasm. Functionally, required for the assembly and/or stability of the 40S ribosomal subunit. Required for the processing of the 20S rRNA-precursor to mature 18S rRNA in a late step of the maturation of 40S ribosomal subunits. The chain is Small ribosomal subunit protein uS2 from Uncinocarpus reesii (strain UAMH 1704).